The following is a 204-amino-acid chain: COBRA-like protein 5 (204 aa).

Residues Met1–Ala24 form the signal peptide. Residues Asn31 and Asn195 are each glycosylated (N-linked (GlcNAc...) asparagine).

Belongs to the COBRA family. In terms of tissue distribution, expressed in roots, stems, leaves, flowers and siliques.

The sequence is that of COBRA-like protein 5 (COBL5) from Arabidopsis thaliana (Mouse-ear cress).